The primary structure comprises 268 residues: Putative hydro-lyase PSPTO_5379 (268 aa).

This sequence belongs to the D-glutamate cyclase family.

The polypeptide is Putative hydro-lyase PSPTO_5379 (Pseudomonas syringae pv. tomato (strain ATCC BAA-871 / DC3000)).